Here is a 338-residue protein sequence, read N- to C-terminus: Mitochondrial genome maintenance exonuclease 1 (338 aa).

A mitochondrion-targeting transit peptide spans 1–64; it reads MKLPLTFCRL…RSVLSRGPAQ (64 aa). Residues Asp-235, Asp-248, and Lys-250 contribute to the active site.

It belongs to the MGME1 family.

Its subcellular location is the mitochondrion. Functionally, metal-dependent single-stranded DNA (ssDNA) exonuclease involved in mitochondrial genome maintenance. Has preference for 5'-3' exonuclease activity but is also capable of endonuclease activity on linear substrates. Necessary for maintenance of proper 7S DNA levels. Probably involved in mitochondrial DNA (mtDNA) repair, possibly via the processing of displaced DNA containing Okazaki fragments during RNA-primed DNA synthesis on the lagging strand or via processing of DNA flaps during long-patch base excision repair. Specifically binds 5-hydroxymethylcytosine (5hmC)-containing DNA in stem cells. The chain is Mitochondrial genome maintenance exonuclease 1 (Mgme1) from Mus musculus (Mouse).